The chain runs to 141 residues: Large ribosomal subunit protein uL22 (141 aa).

The disordered stretch occupies residues 110–141; the sequence is EEKKTVAKKTTTTKAPAKKTTSTKKATAKKES. A compositionally biased stretch (low complexity) spans 117 to 134; sequence KKTTTTKAPAKKTTSTKK.

The protein belongs to the universal ribosomal protein uL22 family. Part of the 50S ribosomal subunit.

This protein binds specifically to 23S rRNA; its binding is stimulated by other ribosomal proteins, e.g. L4, L17, and L20. It is important during the early stages of 50S assembly. It makes multiple contacts with different domains of the 23S rRNA in the assembled 50S subunit and ribosome. Its function is as follows. The globular domain of the protein is located near the polypeptide exit tunnel on the outside of the subunit, while an extended beta-hairpin is found that lines the wall of the exit tunnel in the center of the 70S ribosome. In Campylobacter jejuni subsp. doylei (strain ATCC BAA-1458 / RM4099 / 269.97), this protein is Large ribosomal subunit protein uL22.